The primary structure comprises 243 residues: Thaumatin-like protein (243 aa).

Residues 1–20 form the signal peptide; it reads MASINLFLFAFLLLLSHASA. 8 cysteine pairs are disulfide-bonded: C29/C238, C77/C87, C92/C98, C144/C228, C149/C211, C157/C174, C178/C187, and C188/C198.

It belongs to the thaumatin family.

This is Thaumatin-like protein from Arabidopsis thaliana (Mouse-ear cress).